A 407-amino-acid polypeptide reads, in one-letter code: Transcriptional regulator ICP22 homolog (407 aa).

Residues 34 to 268 (RKRRRKLKPQ…STQPGGVPKL (235 aa)) form a disordered region. A compositionally biased stretch (acidic residues) spans 81 to 241 (EREGEGGEEG…EEAEEEEEEA (161 aa)).

This sequence belongs to the herpesviridae ICP22 family.

The polypeptide is Transcriptional regulator ICP22 homolog (73) (Saimiriine herpesvirus 2 (strain 11) (SaHV-2)).